Here is a 300-residue protein sequence, read N- to C-terminus: Transcription elongation factor A protein 2 (300 aa).

The 78-residue stretch at E6–S83 folds into the TFIIS N-terminal domain. A Glycyl lysine isopeptide (Lys-Gly) (interchain with G-Cter in ubiquitin) cross-link involves residue K58. A phosphoserine mark is found at S60 and S101. The tract at residues D84–P131 is disordered. Residues E103–L117 are compositionally biased toward basic and acidic residues. Positions V139–T255 constitute a TFIIS central domain. Residues D258–K298 form a TFIIS-type zinc finger. Zn(2+)-binding residues include C262, C265, C290, and C293.

Belongs to the TFS-II family. In terms of assembly, interacts with the basal transcription factor GTF2B. Interacts with REXO1.

The protein localises to the nucleus. In terms of biological role, necessary for efficient RNA polymerase II transcription elongation past template-encoded arresting sites. The arresting sites in DNA have the property of trapping a certain fraction of elongating RNA polymerases that pass through, resulting in locked ternary complexes. Cleavage of the nascent transcript by S-II allows the resumption of elongation from the new 3'-terminus. The polypeptide is Transcription elongation factor A protein 2 (TCEA2) (Bos taurus (Bovine)).